We begin with the raw amino-acid sequence, 349 residues long: UDP-N-acetylenolpyruvoylglucosamine reductase (349 aa).

Positions 24-197 constitute an FAD-binding PCMH-type domain; sequence FGIDATARFA…VAVTFRLPKR (174 aa). Residue Arg173 is part of the active site. Residue Ser249 is the Proton donor of the active site. Glu345 is a catalytic residue.

Belongs to the MurB family. Requires FAD as cofactor.

It is found in the cytoplasm. The enzyme catalyses UDP-N-acetyl-alpha-D-muramate + NADP(+) = UDP-N-acetyl-3-O-(1-carboxyvinyl)-alpha-D-glucosamine + NADPH + H(+). It functions in the pathway cell wall biogenesis; peptidoglycan biosynthesis. Cell wall formation. The sequence is that of UDP-N-acetylenolpyruvoylglucosamine reductase from Burkholderia ambifaria (strain MC40-6).